The following is a 107-amino-acid chain: MSRKESKAPRTRMTAGQTRVLMSFFKDNPFPSTTAREKLSKVLGVGPRTVQIWFQNQRQKARGQAKVSDREEGPRACTGSECLGKLCILACAAISRMEEEAAWNLGH.

Positions 6-65 (SKAPRTRMTAGQTRVLMSFFKDNPFPSTTAREKLSKVLGVGPRTVQIWFQNQRQKARGQA) form a DNA-binding region, homeobox.

Its subcellular location is the nucleus. This chain is Homeobox protein HD-3 (HD-3), found in Encephalitozoon cuniculi (strain GB-M1) (Microsporidian parasite).